A 1378-amino-acid polypeptide reads, in one-letter code: MSLVNFYGQLSNTQQFDQIRINIASPDQVRSWSFGEVTKPETINYRTFKPEKDGLFCARIFGPVKDYECLCGKYKRMKNRGIICEKCGVEVTVSRVRRERMGHIELAAPIAHIWFLKSLPSRISTLLDMTMRDLEKILYFENYVVLDPGLSILQKGELLTEEELQKAKDKYGEDAFTASIGAEVIQQMLKDLDFAKLKQELYEELQNTTSEVKKKKLVKRLKLVEDFLESENKPEWMIIDVLPVIPPEIRPLVMLDGGRFATSDLNELYRRVINRNNRLKKLIESKAPDIIVRNEKRMLQEAVDALFDNGRRGRAAKNANKRPFKSLSDMLKGKQGRFRQNLLGKRVDYSGRSVIVVGPELKLHQCGLPKKMALELFKPFIYSKLELYGIATTIKAAKRMVEAEKPEVWDVLEEVIREHPVLLNRAPTLHRLGIQAFEPLLIEGKAIQLHPLVCAAFNADFDGDQMAVHIPLSIEAQLEARVFMMSTNNILSPANGRPIIVPDKDIVLGLYYLTIAFDNEVGEGLMFSDLAEMEHALYNKFITIHTKIKYRRNQLNAEGKMVPVIVDTTYGRLMVGELLPSNPNIEFKFINKQLTKKDISLVIDLVYRHCGQKATVIFADQLMKLGFKYACSSGISFGMDDMVVPESKSTHINETQLEIKEFEQQYSNGLITYGEKYNKVVDAWSRCTDRVANDMMKEIATPPINDEPNHQKINAIYMMAVSGARGSFQQIKQLGGMRGLMTKSNGQIIQTPIISNFKEGLTEFECFNSANGMRKGQIDTALKTASSGYLTRKLVDVAQDCIITEKDCGTDKGIEVKSVIEGGEVIVSLAEKILGRTAAIDIFHPVTNDLILNKGELINEVKLEQIESAGLDRIMIKSVLTCESTTGICSICYGRDLATGTLVSEGEAIGVIAAQSIGEPGTQLTMRTFHIGGAATKGAEISSVEASYDAKVKIISRNVVINSEERKIVMSRNCELLLLDNNGNEKARHKIPYGARLLVDDGDMVIKTQKLAEWDPYTIPIITEKSGKVLFKDMVEGISIRDVTDEATGIPSKVIIESKQYSRGAELRPRIQLLDAKGEVITLSNGLEARYYLPVGAVLSVEDGVQISVGDIIARIPKESTTTKDITGGLPRVAELVEARRPKDHAVIAEVDGRVEFGKDYKSKRRIIIHPIDETMSIEYMVPKGKHVVVNEGDFVKKGDLLIDGNPVLQDILKVMGVEVLANYIVKEVQAVYRLQGVKIDDKHIEVIIRQMLQKVEITDSGGTTLLVGEKVDRHEFDEINEKAIKNGLKPAEAQLILQGITKASLQTRSFISAASFQETTRVLTEAAIAGKVDKLRGLKENVIVGRLVPAGTGYFMDKMRKAAVKLDEENSINADKG.

Zn(2+) is bound by residues Cys-69, Cys-71, Cys-84, and Cys-87. Mg(2+) contacts are provided by Asp-460, Asp-462, and Asp-464. Positions 808, 882, 889, and 892 each coordinate Zn(2+).

The protein belongs to the RNA polymerase beta' chain family. The RNAP catalytic core consists of 2 alpha, 1 beta, 1 beta' and 1 omega subunit. When a sigma factor is associated with the core the holoenzyme is formed, which can initiate transcription. Mg(2+) serves as cofactor. Zn(2+) is required as a cofactor.

The catalysed reaction is RNA(n) + a ribonucleoside 5'-triphosphate = RNA(n+1) + diphosphate. DNA-dependent RNA polymerase catalyzes the transcription of DNA into RNA using the four ribonucleoside triphosphates as substrates. The chain is DNA-directed RNA polymerase subunit beta' from Rickettsia canadensis (strain McKiel).